Consider the following 187-residue polypeptide: NADH-quinone oxidoreductase subunit B (187 aa).

Cysteine 55, cysteine 56, cysteine 121, and cysteine 150 together coordinate [4Fe-4S] cluster.

The protein belongs to the complex I 20 kDa subunit family. As to quaternary structure, NDH-1 is composed of 14 different subunits. Subunits NuoB, C, D, E, F, and G constitute the peripheral sector of the complex. The cofactor is [4Fe-4S] cluster.

The protein localises to the cell inner membrane. The enzyme catalyses a quinone + NADH + 5 H(+)(in) = a quinol + NAD(+) + 4 H(+)(out). Its function is as follows. NDH-1 shuttles electrons from NADH, via FMN and iron-sulfur (Fe-S) centers, to quinones in the respiratory chain. The immediate electron acceptor for the enzyme in this species is believed to be ubiquinone. Couples the redox reaction to proton translocation (for every two electrons transferred, four hydrogen ions are translocated across the cytoplasmic membrane), and thus conserves the redox energy in a proton gradient. The protein is NADH-quinone oxidoreductase subunit B of Bdellovibrio bacteriovorus (strain ATCC 15356 / DSM 50701 / NCIMB 9529 / HD100).